Consider the following 690-residue polypeptide: MSTSMPTALAGGRYQLGQLIGRGGMAEVHVALDTRLGRTVAVKIMRADLANDDIFLARFRREAHAVAQMNNPNIVNIYDSGEELVSSESGDAERLPYIVMEYVKGQTLRDIIKVNGALSQRDCEQVMLGVLNALDYSHRMGIIHRDIKPGNIMISEQGVVKVMDFGIARALDDSAATMTQSQGVVGTAQYLSPEQARGETVDMRSDLYSAGCVLYEMLTGRPPFTGDSAVAIAYQHVSEVATPPSAAVPGLPKMWDSICAKAMAKDRQNRYATASEFKTDILTYMNGGVPVAAAFNPLTDLSNMKARKEAERDLPTTPVEPHQQPTQAFNPVTGQFEQIPPANGANAAALQSRAQQRAAAAKAKKRKKIIIGSVIAAIVAVLVIVGIVFAMNGSGNKSSEDTVTIPEVCNASTSKDNIKLKLEASGLKMTEKQDTDSTEPEGTCTKMSPDAGSKVAKGSAVKVWFSAGPQSTQVPDVKERSQEEARSILESAGFKVNAAVKTEDSADIAKDMVTKTDPAAGQSVPKGTTITIYVSSGMTTVPSNLVGQSKDSVLQQYEGKFSFTVEQESSDTVEAGLITRVSPDSGSSIAQGGFITIWVSTGKEKVAVPNITAGTDYVTAELMLKAVGLKAQANGPTGSTAVVVSINPGAGSQVDAGSTVTITTKAGSTGGGTGTGDGGNGTGNGGGTGE.

Residues 14-285 enclose the Protein kinase domain; it reads YQLGQLIGRG…EFKTDILTYM (272 aa). ATP contacts are provided by residues 20 to 28 and Lys43; that span reads IGRGGMAEV. Catalysis depends on Asp146, which acts as the Proton acceptor. PASTA domains follow at residues 399–467, 468–536, 540–601, and 602–666; these read SEDT…WFSA, GPQS…YVSS, TVPS…WVST, and GKEK…TTKA. A disordered region spans residues 429–453; sequence MTEKQDTDSTEPEGTCTKMSPDAGS. The tract at residues 665–690 is disordered; it reads KAGSTGGGTGTGDGGNGTGNGGGTGE. The span at 668–690 shows a compositional bias: gly residues; the sequence is STGGGTGTGDGGNGTGNGGGTGE.

It belongs to the protein kinase superfamily. Ser/Thr protein kinase family.

The enzyme catalyses L-seryl-[protein] + ATP = O-phospho-L-seryl-[protein] + ADP + H(+). The catalysed reaction is L-threonyl-[protein] + ATP = O-phospho-L-threonyl-[protein] + ADP + H(+). This chain is Probable serine/threonine-protein kinase PknB (pknB), found in Bifidobacterium longum (strain NCC 2705).